A 638-amino-acid polypeptide reads, in one-letter code: Homeobox protein 10 (638 aa).

Disordered stretches follow at residues 23–55, 76–139, and 195–219; these read ETQP…LNTN, TDEN…VNTN, and IANE…EEAK. Low complexity-rich tracts occupy residues 24 to 55 and 80 to 139; these read TQPT…LNTN and NTSV…VNTN. Positions 205–214 are enriched in polar residues; the sequence is EPQTNSNVNG. A DNA-binding region (homeobox) is located at residues 301-360; sequence NKKKRQRTSPEQLAILEQIFETDKMPSQQIRVRLANQLGMSSRRVQIWFQNKRAKVKRGG. 2 disordered regions span residues 381–431 and 448–638; these read EDED…TSSD and SSSS…IVKN. 3 stretches are compositionally biased toward low complexity: residues 388-411, 419-430, and 462-501; these read SLTI…NNNG, LSSSPTNLNTSS, and NNTN…TTTT. 2 stretches are compositionally biased toward polar residues: residues 502–522 and 545–573; these read SSSP…NKLT and SLNS…TDKQ. The segment covering 575–625 has biased composition (low complexity); the sequence is NSDFSNFNNNNNNNNNNNNNNNNNNNINNNGNNNSNNNDSNNNNNKSNFSD.

It is found in the nucleus. Its function is as follows. Putative transcription factor. This is Homeobox protein 10 (hbx10) from Dictyostelium discoideum (Social amoeba).